We begin with the raw amino-acid sequence, 712 residues long: Capsid protein (712 aa).

Disordered stretches follow at residues 614–633 (LTST…KEVR) and 646–665 (CWMS…PESS). The stretch at 670 to 706 (YDNHTKLAKRVKKEIHNQNRRHRLLLAHLRRERDRLL) forms a coiled coil.

The protein belongs to the anelloviridae capsid protein family.

Its subcellular location is the virion. Self-assembles to form an icosahedral capsid with a T=1 symmetry, about 30 nm in diameter, and consisting of 60 capsid proteins. The capsid encapsulates the genomic DNA. Capsid protein is involved in attachment and entry into the host cell. The polypeptide is Capsid protein (Torque teno tamarin virus (isolate So-TTV2)).